We begin with the raw amino-acid sequence, 142 residues long: Large ribosomal subunit protein uL13 (142 aa).

It belongs to the universal ribosomal protein uL13 family. Part of the 50S ribosomal subunit.

Its function is as follows. This protein is one of the early assembly proteins of the 50S ribosomal subunit, although it is not seen to bind rRNA by itself. It is important during the early stages of 50S assembly. This is Large ribosomal subunit protein uL13 from Geobacter sp. (strain M21).